Reading from the N-terminus, the 218-residue chain is Large ribosomal subunit protein uL3 (218 aa).

The protein belongs to the universal ribosomal protein uL3 family. In terms of assembly, part of the 50S ribosomal subunit. Forms a cluster with proteins L14 and L19.

Its function is as follows. One of the primary rRNA binding proteins, it binds directly near the 3'-end of the 23S rRNA, where it nucleates assembly of the 50S subunit. This is Large ribosomal subunit protein uL3 from Corynebacterium efficiens (strain DSM 44549 / YS-314 / AJ 12310 / JCM 11189 / NBRC 100395).